The chain runs to 121 residues: Large ribosomal subunit protein bL20 (121 aa).

It belongs to the bacterial ribosomal protein bL20 family.

Its function is as follows. Binds directly to 23S ribosomal RNA and is necessary for the in vitro assembly process of the 50S ribosomal subunit. It is not involved in the protein synthesizing functions of that subunit. The polypeptide is Large ribosomal subunit protein bL20 (Ruegeria pomeroyi (strain ATCC 700808 / DSM 15171 / DSS-3) (Silicibacter pomeroyi)).